Here is a 106-residue protein sequence, read N- to C-terminus: Nucleoid-associated protein Abu_0429 (106 aa).

This sequence belongs to the YbaB/EbfC family. As to quaternary structure, homodimer.

Its subcellular location is the cytoplasm. It localises to the nucleoid. In terms of biological role, binds to DNA and alters its conformation. May be involved in regulation of gene expression, nucleoid organization and DNA protection. The chain is Nucleoid-associated protein Abu_0429 from Aliarcobacter butzleri (strain RM4018) (Arcobacter butzleri).